A 219-amino-acid chain; its full sequence is Leukocyte surface antigen CD53 (219 aa).

The Cytoplasmic segment spans residues 2 to 11; sequence GMSSLKLLKY. Residues 12–32 form a helical membrane-spanning segment; that stretch reads VLFFFNFLFWVCGCCILGFGI. Residues 33-54 lie on the Extracellular side of the membrane; it reads HLLVQNTYGILFRNLPFLTLGN. The helical transmembrane segment at 55–69 threads the bilayer; that stretch reads VLVIVGSIIMVVAFL. Topologically, residues 70–80 are cytoplasmic; sequence GCMGSIKENKC. A helical membrane pass occupies residues 81-106; sequence LLMSFFVLLLLILLAEVTLAILLFVY. At 107 to 181 the chain is on the extracellular side; that stretch reads EKKINTLVAE…KKGQAWFHSN (75 aa). Asn-119, Asn-129, and Asn-148 each carry an N-linked (GlcNAc...) asparagine glycan. A helical membrane pass occupies residues 182 to 206; the sequence is FLYIGIVTICVCVIQVLGMSFALTL. The Cytoplasmic portion of the chain corresponds to 207–219; the sequence is NCQIDKTSQALGL.

Belongs to the tetraspanin (TM4SF) family. As to quaternary structure, interacts with SCIMP. Interacts with CD45/PTPRC. Interacts with IL7R. Interacts with RBL2 and PPP2CA. As to expression, spleen and thymus, B-cells, monocytes, macrophages, neutrophils, single (CD4 or CD8) positive thymocytes, peripheral T-cells.

It localises to the cell membrane. The protein localises to the cell junction. It is found in the membrane. Required for efficient formation of myofibers in regenerating muscle at the level of cell fusion. May be involved in growth regulation in hematopoietic cells. The protein is Leukocyte surface antigen CD53 (Cd53) of Rattus norvegicus (Rat).